The following is a 167-amino-acid chain: Transcriptional regulator MraZ (167 aa).

SpoVT-AbrB domains lie at 8 to 51 and 92 to 135; these read ESHH…YGDH and SLPT…KPET.

It belongs to the MraZ family. As to quaternary structure, forms oligomers.

It localises to the cytoplasm. It is found in the nucleoid. This is Transcriptional regulator MraZ from Ruegeria sp. (strain TM1040) (Silicibacter sp.).